Consider the following 178-residue polypeptide: uncharacterized protein (178 aa).

This is an uncharacterized protein from Schizosaccharomyces pombe (strain 972 / ATCC 24843) (Fission yeast).